We begin with the raw amino-acid sequence, 233 residues long: MGKTSKRFQELLKKVEQDKIYNLSEAIDTVKTLASAKFNETVEIALKLNVDPRHADQMVRGSVVLPAGTGKVVRVAVIAKDAKADEAKAAGADIVGADDLVEDIQKGIMNFDVLIATPNLMGLVGKVGRILGPKGLMPNPKTGTVTMDVAQAVNNAKSGQVNFRVDKQGNIHAGLGKVNFTKEQLNENISTFIKAINKHKPATAKGRYVKNASLSLTMSPSVTLDTQEVMDLK.

It belongs to the universal ribosomal protein uL1 family. In terms of assembly, part of the 50S ribosomal subunit.

Binds directly to 23S rRNA. The L1 stalk is quite mobile in the ribosome, and is involved in E site tRNA release. In terms of biological role, protein L1 is also a translational repressor protein, it controls the translation of the L11 operon by binding to its mRNA. The protein is Large ribosomal subunit protein uL1 of Campylobacter concisus (strain 13826).